A 331-amino-acid chain; its full sequence is Cytosolic Fe-S cluster assembly factor NBP35 (331 aa).

The segment covering 1 to 10 (MSPSQTQIEK) has biased composition (polar residues). The disordered stretch occupies residues 1–32 (MSPSQTQIEKSQLAAPEPEHCPGPESELAGQG). [4Fe-4S] cluster-binding residues include cysteine 21, cysteine 35, cysteine 38, and cysteine 44. 75–82 (GKGGVGKS) serves as a coordination point for ATP. Residues cysteine 249 and cysteine 252 each contribute to the [4Fe-4S] cluster site.

It belongs to the Mrp/NBP35 ATP-binding proteins family. NUBP1/NBP35 subfamily. Heterotetramer of 2 NBP35 and 2 CFD1 chains. [4Fe-4S] cluster serves as cofactor.

Its subcellular location is the cytoplasm. The protein localises to the nucleus. In terms of biological role, component of the cytosolic iron-sulfur (Fe/S) protein assembly (CIA) machinery. Required for maturation of extramitochondrial Fe-S proteins. The NBP35-CFD1 heterotetramer forms a Fe-S scaffold complex, mediating the de novo assembly of an Fe-S cluster and its transfer to target apoproteins. Required for biogenesis and export of both ribosomal subunits, which may reflect a role in assembly of the Fe/S clusters in RLI1, a protein which performs rRNA processing and ribosome export. The sequence is that of Cytosolic Fe-S cluster assembly factor NBP35 from Candida albicans (strain SC5314 / ATCC MYA-2876) (Yeast).